A 217-amino-acid chain; its full sequence is MGQKVCAHGFRVGPTLIKGWDSVLYAEKHYKTLFIQDLKIRDVINKGFNQAQISRVLIERPSNKSIIININAKKPNIIIGRNGSEIDKLKKAIEKMTSLKEVYINIHEVRKFNIDAAIVAQTIALQLEKRVSFRKAMKTAIQASFKQGGQGIRVSCSGRLGGAEIARTEWYIEGRMPLHTLRADIDYSTAEAITTYGVIGVKVWIYKGEYTENKRYN.

In terms of domain architecture, KH type-2 spans 40 to 110 (IRDVINKGFN…EVYINIHEVR (71 aa)).

It belongs to the universal ribosomal protein uS3 family. In terms of assembly, part of the 30S ribosomal subunit. Forms a tight complex with proteins S10 and S14.

Its function is as follows. Binds the lower part of the 30S subunit head. Binds mRNA in the 70S ribosome, positioning it for translation. This Rickettsia massiliae (strain Mtu5) protein is Small ribosomal subunit protein uS3.